The chain runs to 440 residues: Xylose isomerase (440 aa).

Catalysis depends on residues His-100 and Asp-103. Mg(2+) is bound by residues Glu-231, Glu-267, His-270, Asp-295, Asp-306, Asp-308, and Asp-338.

This sequence belongs to the xylose isomerase family. Homotetramer. The cofactor is Mg(2+).

The protein localises to the cytoplasm. It carries out the reaction alpha-D-xylose = alpha-D-xylulofuranose. The chain is Xylose isomerase from Paraburkholderia phytofirmans (strain DSM 17436 / LMG 22146 / PsJN) (Burkholderia phytofirmans).